Reading from the N-terminus, the 83-residue chain is Mu-theraphotoxin-Hhn2j 4 (83 aa).

Residues 1–21 (MKASMFLALAGSVLLFVVGYA) form the signal peptide. Residues 22–48 (SESEEKEFPIELLSKIFAVDVFKGEER) constitute a propeptide that is removed on maturation. 3 disulfide bridges follow: Cys50/Cys65, Cys57/Cys70, and Cys64/Cys77. Residue Leu81 is modified to Leucine amide.

This sequence belongs to the neurotoxin 10 (Hwtx-1) family. 15 (Hntx-3) subfamily. As to quaternary structure, monomer. In terms of tissue distribution, expressed by the venom gland.

Its subcellular location is the secreted. Its function is as follows. Lethal neurotoxin. Selectively blocks tetrodotoxin-sensitive voltage-gated sodium channels (Nav). Does not affect tetrodotoxin-resistant voltage-gated sodium channels or calcium channels. The polypeptide is Mu-theraphotoxin-Hhn2j 4 (Cyriopagopus hainanus (Chinese bird spider)).